We begin with the raw amino-acid sequence, 682 residues long: Potassium-transporting ATPase ATP-binding subunit (682 aa).

4 helical membrane passes run 34–54, 58–78, 219–239, and 254–274; these read PVMFVVWAGSVLTTLLTLAMV, IAGSALFTGIISLWLWFTVLF, IALTILLIALTIVFLLATATL, and VLVALLVCLIPTTIGGLLSAI. Aspartate 307 (4-aspartylphosphate intermediate) is an active-site residue. Residues aspartate 344, glutamate 348, 377 to 384, and lysine 395 each bind ATP; that span reads FTAQSRMS. Mg(2+) contacts are provided by aspartate 518 and aspartate 522. 3 helical membrane-spanning segments follow: residues 588–608, 616–636, and 662–682; these read FAIIPAAFAATYPQLNALNVM, AILSAVIFNALIIIFLIPLAL, and LVVPFIGIKVIDVLLTLLGLA.

It belongs to the cation transport ATPase (P-type) (TC 3.A.3) family. Type IA subfamily. The system is composed of three essential subunits: KdpA, KdpB and KdpC.

The protein resides in the cell inner membrane. The enzyme catalyses K(+)(out) + ATP + H2O = K(+)(in) + ADP + phosphate + H(+). Part of the high-affinity ATP-driven potassium transport (or Kdp) system, which catalyzes the hydrolysis of ATP coupled with the electrogenic transport of potassium into the cytoplasm. This subunit is responsible for energy coupling to the transport system and for the release of the potassium ions to the cytoplasm. This is Potassium-transporting ATPase ATP-binding subunit from Salmonella typhimurium (strain LT2 / SGSC1412 / ATCC 700720).